A 477-amino-acid chain; its full sequence is tRNA-2-methylthio-N(6)-dimethylallyladenosine synthase (477 aa).

Residues Lys3–Gly120 enclose the MTTase N-terminal domain. 6 residues coordinate [4Fe-4S] cluster: Cys12, Cys49, Cys83, Cys157, Cys161, and Cys164. Residues Arg143–Arg375 enclose the Radical SAM core domain. Residues Arg378–Arg441 form the TRAM domain.

The protein belongs to the methylthiotransferase family. MiaB subfamily. Monomer. The cofactor is [4Fe-4S] cluster.

Its subcellular location is the cytoplasm. It carries out the reaction N(6)-dimethylallyladenosine(37) in tRNA + (sulfur carrier)-SH + AH2 + 2 S-adenosyl-L-methionine = 2-methylsulfanyl-N(6)-dimethylallyladenosine(37) in tRNA + (sulfur carrier)-H + 5'-deoxyadenosine + L-methionine + A + S-adenosyl-L-homocysteine + 2 H(+). Functionally, catalyzes the methylthiolation of N6-(dimethylallyl)adenosine (i(6)A), leading to the formation of 2-methylthio-N6-(dimethylallyl)adenosine (ms(2)i(6)A) at position 37 in tRNAs that read codons beginning with uridine. The sequence is that of tRNA-2-methylthio-N(6)-dimethylallyladenosine synthase from Alteromonas mediterranea (strain DSM 17117 / CIP 110805 / LMG 28347 / Deep ecotype).